Here is a 372-residue protein sequence, read N- to C-terminus: 4-hydroxy-3-methylbut-2-en-1-yl diphosphate synthase (flavodoxin) (372 aa).

4 residues coordinate [4Fe-4S] cluster: Cys270, Cys273, Cys305, and Glu312.

Belongs to the IspG family. Requires [4Fe-4S] cluster as cofactor.

It carries out the reaction (2E)-4-hydroxy-3-methylbut-2-enyl diphosphate + oxidized [flavodoxin] + H2O + 2 H(+) = 2-C-methyl-D-erythritol 2,4-cyclic diphosphate + reduced [flavodoxin]. Its pathway is isoprenoid biosynthesis; isopentenyl diphosphate biosynthesis via DXP pathway; isopentenyl diphosphate from 1-deoxy-D-xylulose 5-phosphate: step 5/6. In terms of biological role, converts 2C-methyl-D-erythritol 2,4-cyclodiphosphate (ME-2,4cPP) into 1-hydroxy-2-methyl-2-(E)-butenyl 4-diphosphate. This Salmonella typhi protein is 4-hydroxy-3-methylbut-2-en-1-yl diphosphate synthase (flavodoxin).